The primary structure comprises 424 residues: GTPase Obg (424 aa).

Residues Ala-2–Leu-158 form the Obg domain. The region spanning Ser-159–Glu-326 is the OBG-type G domain. GTP-binding positions include Gly-165–Ser-172, Phe-190–Val-194, Asp-211–Gly-214, Asn-280–Asp-283, and Ser-307–Leu-309. 2 residues coordinate Mg(2+): Ser-172 and Thr-192. The region spanning Lys-344–Glu-422 is the OCT domain.

The protein belongs to the TRAFAC class OBG-HflX-like GTPase superfamily. OBG GTPase family. In terms of assembly, monomer. The cofactor is Mg(2+).

The protein resides in the cytoplasm. Its function is as follows. An essential GTPase which binds GTP, GDP and possibly (p)ppGpp with moderate affinity, with high nucleotide exchange rates and a fairly low GTP hydrolysis rate. Plays a role in control of the cell cycle, stress response, ribosome biogenesis and in those bacteria that undergo differentiation, in morphogenesis control. This Mycoplasmopsis synoviae (strain 53) (Mycoplasma synoviae) protein is GTPase Obg.